The sequence spans 436 residues: Trigger factor (436 aa).

The region spanning 163 to 248 (GDRVTVDFEG…LKKIEAAHLP (86 aa)) is the PPIase FKBP-type domain.

The protein belongs to the FKBP-type PPIase family. Tig subfamily.

It localises to the cytoplasm. The catalysed reaction is [protein]-peptidylproline (omega=180) = [protein]-peptidylproline (omega=0). Its function is as follows. Involved in protein export. Acts as a chaperone by maintaining the newly synthesized protein in an open conformation. Functions as a peptidyl-prolyl cis-trans isomerase. This Albidiferax ferrireducens (strain ATCC BAA-621 / DSM 15236 / T118) (Rhodoferax ferrireducens) protein is Trigger factor.